The sequence spans 278 residues: MGSPVFRRPFCHLSTYSLLWAIAAVALSTAQVEVVTQDERKLLHTTASLRCSLKTTQEPLIVTWQKKKAVGPENMVTYSKAHGVVIQPTYKDRINITELGLLNTSITFWNTTLDDEGCYMCLFNMFGSGKVSGTACLTLYVQPIVHLHYNYFEDHLNITCSATARPAPAISWKGTGSGIENSTESHSHSNGTTSVTSILRVKDPKTQVGKEVICQVLYLGNVIDYKQSLDKGFWFSVPLLLSIVSLVILLVLISILLYWKRHRNQERGESSQGMQRMK.

A signal peptide spans 1–30 (MGSPVFRRPFCHLSTYSLLWAIAAVALSTA). The region spanning 31–141 (QVEVVTQDER…SGTACLTLYV (111 aa)) is the Ig-like V-type domain. The Extracellular segment spans residues 31-232 (QVEVVTQDER…IDYKQSLDKG (202 aa)). Disulfide bonds link Cys-51–Cys-121 and Cys-118–Cys-136. Asn-95, Asn-103, and Asn-110 each carry an N-linked (GlcNAc...) asparagine glycan. The Ig-like C2-type domain occupies 142–232 (QPIVHLHYNY…IDYKQSLDKG (91 aa)). Asn-157, Asn-181, and Asn-190 each carry an N-linked (GlcNAc...) asparagine glycan. A disulfide bridge links Cys-160 with Cys-214. A helical membrane pass occupies residues 233 to 259 (FWFSVPLLLSIVSLVILLVLISILLYW). At 260-278 (KRHRNQERGESSQGMQRMK) the chain is on the cytoplasmic side.

In terms of assembly, CD200 and CD200R1 interact via their respective N-terminal Ig-like domains. In terms of tissue distribution, found on the surface of neurons, thymocytes, B-cells and follicular dendritic cells.

The protein localises to the cell membrane. In terms of biological role, costimulates T-cell proliferation. May regulate myeloid cell activity in a variety of tissues. This is OX-2 membrane glycoprotein (Cd200) from Rattus norvegicus (Rat).